The chain runs to 96 residues: Large ribosomal subunit protein bL21 (96 aa).

The protein belongs to the bacterial ribosomal protein bL21 family. As to quaternary structure, part of the 50S ribosomal subunit. Contacts protein L20.

Its function is as follows. This protein binds to 23S rRNA in the presence of protein L20. This chain is Large ribosomal subunit protein bL21, found in Sulfurihydrogenibium sp. (strain YO3AOP1).